We begin with the raw amino-acid sequence, 263 residues long: Methylesterase 1 (263 aa).

The active-site Acyl-ester intermediate is serine 85. Residues aspartate 213 and histidine 241 each act as charge relay system in the active site.

It belongs to the AB hydrolase superfamily. Methylesterase family.

It carries out the reaction methyl (indol-3-yl)acetate + H2O = (indol-3-yl)acetate + methanol + H(+). It catalyses the reaction methyl (-)-jasmonate + H2O = jasmonate + methanol + H(+). The enzyme catalyses methyl salicylate + H2O = salicylate + methanol + H(+). Its pathway is plant hormone biosynthesis. It functions in the pathway lipid metabolism; oxylipin biosynthesis. Its activity is regulated as follows. Esterase activity is down-regulated by salicylic acid (SA). Its function is as follows. Methylesterase shown to have carboxylesterase activity, methyl indole-3-acetic acid (MeIAA) esterase activity, methyl salicylate (MeSA) esterase activity and methyl jasmonate (MeJA) esterase activity in vitro. Required to convert methyl salicylate (MeSA) to salicylic acid (SA) as part of the signal transduction pathways that activate systemic acquired resistance in systemic tissue. MeSA is believed to be an inactive form that needs to be demethylated to exert a biological effect. This is Methylesterase 1 from Arabidopsis thaliana (Mouse-ear cress).